We begin with the raw amino-acid sequence, 211 residues long: uncharacterized protein (211 aa).

This is an uncharacterized protein from Acidianus convivator (ATV).